Reading from the N-terminus, the 251-residue chain is Ubiquinone/menaquinone biosynthesis C-methyltransferase UbiE (251 aa).

S-adenosyl-L-methionine contacts are provided by residues Thr-74, Asp-95, Asn-123–Ala-124, and Ser-140.

It belongs to the class I-like SAM-binding methyltransferase superfamily. MenG/UbiE family.

The enzyme catalyses a 2-demethylmenaquinol + S-adenosyl-L-methionine = a menaquinol + S-adenosyl-L-homocysteine + H(+). The catalysed reaction is a 2-methoxy-6-(all-trans-polyprenyl)benzene-1,4-diol + S-adenosyl-L-methionine = a 5-methoxy-2-methyl-3-(all-trans-polyprenyl)benzene-1,4-diol + S-adenosyl-L-homocysteine + H(+). It participates in quinol/quinone metabolism; menaquinone biosynthesis; menaquinol from 1,4-dihydroxy-2-naphthoate: step 2/2. The protein operates within cofactor biosynthesis; ubiquinone biosynthesis. Functionally, methyltransferase required for the conversion of demethylmenaquinol (DMKH2) to menaquinol (MKH2) and the conversion of 2-polyprenyl-6-methoxy-1,4-benzoquinol (DDMQH2) to 2-polyprenyl-3-methyl-6-methoxy-1,4-benzoquinol (DMQH2). The sequence is that of Ubiquinone/menaquinone biosynthesis C-methyltransferase UbiE from Serratia proteamaculans (strain 568).